Consider the following 509-residue polypeptide: Poly(A) RNA polymerase GLD2-B (509 aa).

Residues 88 to 125 (PGSPPSSFQNRKRRSDEGNSPYDVKRQRFQSPQEQTVN) are disordered. The span at 116-125 (FQSPQEQTVN) shows a compositional bias: polar residues. Positions 240 and 242 each coordinate Mg(2+). In terms of domain architecture, PAP-associated spans 409–462 (LGDLLLGFLKYFAVEFDWSKDIISLREAKALPRTDDYEWRNKYICVEEPFDGSN).

It belongs to the DNA polymerase type-B-like family. GLD2 subfamily. Component of a complex at least composed of cpeb1, cpsf1, tent2/gld2, pabpc1/ePAB, parn and sympk. Following oocyte maturation, parn is expelled from the complex. Interacts with rbfox2. Interacts with sympk. The cofactor is Mg(2+). It depends on Mn(2+) as a cofactor.

The protein resides in the cytoplasm. The enzyme catalyses RNA(n) + ATP = RNA(n)-3'-adenine ribonucleotide + diphosphate. In terms of biological role, cytoplasmic poly(A) RNA polymerase that adds successive AMP monomers to the 3'-end of specific RNAs, forming a poly(A) tail. In contrast to the canonical nuclear poly(A) RNA polymerase, it only adds poly(A) to selected cytoplasmic mRNAs during oocyte maturation. Plays a central role during oocyte maturation by mediating polyadenylation of dormant mRNAs, which contain 5'AAUAAA-3' sequence in their 3'-UTR. In immature oocytes, polyadenylation of poly(A) tails is counteracted by the ribonuclease parn. During maturation parn is excluded from the ribonucleoprotein complex, allowing poly(A) elongation and activation of mRNAs. May not play a role in replication-dependent histone mRNA degradation. This is Poly(A) RNA polymerase GLD2-B from Xenopus laevis (African clawed frog).